The following is a 348-amino-acid chain: Phosphate acyltransferase (348 aa).

It belongs to the PlsX family. Homodimer. Probably interacts with PlsY.

It is found in the cytoplasm. It catalyses the reaction a fatty acyl-[ACP] + phosphate = an acyl phosphate + holo-[ACP]. It functions in the pathway lipid metabolism; phospholipid metabolism. In terms of biological role, catalyzes the reversible formation of acyl-phosphate (acyl-PO(4)) from acyl-[acyl-carrier-protein] (acyl-ACP). This enzyme utilizes acyl-ACP as fatty acyl donor, but not acyl-CoA. The chain is Phosphate acyltransferase from Synechocystis sp. (strain ATCC 27184 / PCC 6803 / Kazusa).